Here is a 313-residue protein sequence, read N- to C-terminus: Probable alpha-L-glutamate ligase (313 aa).

One can recognise an ATP-grasp domain in the interval 112–294 (LQMLMAQGIA…IALQMIVHLE (183 aa)). Residues K148, 185 to 186 (EF), D194, and 218 to 220 (RAN) each bind ATP. Positions 255, 267, and 269 each coordinate Mg(2+). 3 residues coordinate Mn(2+): D255, E267, and N269.

It belongs to the RimK family. Mg(2+) serves as cofactor. Mn(2+) is required as a cofactor.

This is Probable alpha-L-glutamate ligase from Pasteurella multocida (strain Pm70).